The primary structure comprises 240 residues: UDP-2,3-diacylglucosamine hydrolase (240 aa).

Aspartate 8, histidine 10, aspartate 41, asparagine 79, and histidine 114 together coordinate Mn(2+). Residue 79 to 80 (NR) participates in substrate binding. Aspartate 122, serine 160, asparagine 164, lysine 167, and histidine 195 together coordinate substrate. The Mn(2+) site is built by histidine 195 and histidine 197.

It belongs to the LpxH family. Mn(2+) serves as cofactor.

Its subcellular location is the cell inner membrane. The enzyme catalyses UDP-2-N,3-O-bis[(3R)-3-hydroxytetradecanoyl]-alpha-D-glucosamine + H2O = 2-N,3-O-bis[(3R)-3-hydroxytetradecanoyl]-alpha-D-glucosaminyl 1-phosphate + UMP + 2 H(+). The protein operates within glycolipid biosynthesis; lipid IV(A) biosynthesis; lipid IV(A) from (3R)-3-hydroxytetradecanoyl-[acyl-carrier-protein] and UDP-N-acetyl-alpha-D-glucosamine: step 4/6. Its function is as follows. Hydrolyzes the pyrophosphate bond of UDP-2,3-diacylglucosamine to yield 2,3-diacylglucosamine 1-phosphate (lipid X) and UMP by catalyzing the attack of water at the alpha-P atom. Involved in the biosynthesis of lipid A, a phosphorylated glycolipid that anchors the lipopolysaccharide to the outer membrane of the cell. This Shigella sonnei (strain Ss046) protein is UDP-2,3-diacylglucosamine hydrolase.